A 328-amino-acid polypeptide reads, in one-letter code: Mannitol-1-phosphate 5-dehydrogenase (328 aa).

3-14 (LIHFGAGNIGCG) is a binding site for NAD(+).

It belongs to the mannitol dehydrogenase family.

It catalyses the reaction D-mannitol 1-phosphate + NAD(+) = beta-D-fructose 6-phosphate + NADH + H(+). This chain is Mannitol-1-phosphate 5-dehydrogenase (mtlD), found in Mycoplasma mycoides subsp. mycoides SC (strain CCUG 32753 / NCTC 10114 / PG1).